A 102-amino-acid polypeptide reads, in one-letter code: uncharacterized protein (102 aa).

The region spanning 48-102 is the HTH cro/C1-type domain; sequence LNDKRKSLGIELSMLELQTGVSISTLNRLFQDPSQVRFTTVFLVAQTLGVSLCAI. A DNA-binding region (H-T-H motif) is located at residues 59–78; the sequence is LSMLELQTGVSISTLNRLFQ.

This is an uncharacterized protein from Haemophilus influenzae (strain ATCC 51907 / DSM 11121 / KW20 / Rd).